A 551-amino-acid polypeptide reads, in one-letter code: CTP synthase (551 aa).

The interval 1-267 (MPKYVFVTGG…GRYVMEHLGW (267 aa)) is amidoligase domain. S13 contributes to the CTP binding site. A UTP-binding site is contributed by S13. 14–19 (SVGKGI) contacts ATP. Y54 is an L-glutamine binding site. D71 is an ATP binding site. 2 residues coordinate Mg(2+): D71 and E141. Residues 148–150 (DIE), 188–193 (KTKPTQ), and K224 contribute to the CTP site. UTP is bound by residues 188–193 (KTKPTQ) and K224. The Glutamine amidotransferase type-1 domain occupies 292 to 532 (RIALVGKYVE…IGVAKHVLRE (241 aa)). An L-glutamine-binding site is contributed by G353. The active-site Nucleophile; for glutamine hydrolysis is the C380. Residues 381 to 384 (YGLH), E404, and R460 contribute to the L-glutamine site. Active-site residues include H505 and E507.

The protein belongs to the CTP synthase family. In terms of assembly, homotetramer.

It catalyses the reaction UTP + L-glutamine + ATP + H2O = CTP + L-glutamate + ADP + phosphate + 2 H(+). It carries out the reaction L-glutamine + H2O = L-glutamate + NH4(+). The catalysed reaction is UTP + NH4(+) + ATP = CTP + ADP + phosphate + 2 H(+). It functions in the pathway pyrimidine metabolism; CTP biosynthesis via de novo pathway; CTP from UDP: step 2/2. Its activity is regulated as follows. Allosterically activated by GTP, when glutamine is the substrate; GTP has no effect on the reaction when ammonia is the substrate. The allosteric effector GTP functions by stabilizing the protein conformation that binds the tetrahedral intermediate(s) formed during glutamine hydrolysis. Inhibited by the product CTP, via allosteric rather than competitive inhibition. In terms of biological role, catalyzes the ATP-dependent amination of UTP to CTP with either L-glutamine or ammonia as the source of nitrogen. Regulates intracellular CTP levels through interactions with the four ribonucleotide triphosphates. In Thermomicrobium roseum (strain ATCC 27502 / DSM 5159 / P-2), this protein is CTP synthase.